The primary structure comprises 150 residues: Ribosome-binding factor A (150 aa).

The segment at 131-150 is disordered; it reads LSHDDDEDGGADEAPRNGDE.

Belongs to the RbfA family. As to quaternary structure, monomer. Binds 30S ribosomal subunits, but not 50S ribosomal subunits or 70S ribosomes.

The protein resides in the cytoplasm. In terms of biological role, one of several proteins that assist in the late maturation steps of the functional core of the 30S ribosomal subunit. Associates with free 30S ribosomal subunits (but not with 30S subunits that are part of 70S ribosomes or polysomes). Required for efficient processing of 16S rRNA. May interact with the 5'-terminal helix region of 16S rRNA. This chain is Ribosome-binding factor A, found in Brucella melitensis biotype 2 (strain ATCC 23457).